Consider the following 524-residue polypeptide: Methyl-CpG-binding domain-containing protein 8 (524 aa).

Residues 45–60 (CSSLSPSSSASLAASA) show a composition bias toward low complexity. Residues 45–151 (CSSLSPSSSA…EEELEDNEGQ (107 aa)) are disordered. Residues 75–84 (FNESAGSRKQ) are compositionally biased toward polar residues. The span at 106–116 (RQRDDSSREEQ) shows a compositional bias: basic and acidic residues. The span at 136 to 149 (EEEDEGEEELEDNE) shows a compositional bias: acidic residues. In terms of domain architecture, MBD spans 334–406 (VVNACDYGGY…QHYYLQSDNK (73 aa)).

As to expression, expressed in shoot meristems, roots (vasculature and tips), hypocotyls (vasculature), cotyledons (vasculature and hydathodes), young leaves, buds, flowers and stems. Detected in stomata.

It localises to the nucleus. Probable transcriptional regulator. May regulates developmental traits such as flowering time. This chain is Methyl-CpG-binding domain-containing protein 8 (MBD8), found in Arabidopsis thaliana (Mouse-ear cress).